Reading from the N-terminus, the 244-residue chain is Electron transfer flavoprotein beta subunit lysine methyltransferase homolog (244 aa).

It belongs to the methyltransferase superfamily. ETFBKMT family.

Its function is as follows. Probable methyltransferase. The polypeptide is Electron transfer flavoprotein beta subunit lysine methyltransferase homolog (Caenorhabditis elegans).